Reading from the N-terminus, the 345-residue chain is Phosphoribosylformylglycinamidine cyclo-ligase (345 aa).

Belongs to the AIR synthase family.

It localises to the cytoplasm. It carries out the reaction 2-formamido-N(1)-(5-O-phospho-beta-D-ribosyl)acetamidine + ATP = 5-amino-1-(5-phospho-beta-D-ribosyl)imidazole + ADP + phosphate + H(+). It participates in purine metabolism; IMP biosynthesis via de novo pathway; 5-amino-1-(5-phospho-D-ribosyl)imidazole from N(2)-formyl-N(1)-(5-phospho-D-ribosyl)glycinamide: step 2/2. The polypeptide is Phosphoribosylformylglycinamidine cyclo-ligase (Shewanella woodyi (strain ATCC 51908 / MS32)).